A 632-amino-acid chain; its full sequence is 1-deoxy-D-xylulose-5-phosphate synthase (632 aa).

Thiamine diphosphate contacts are provided by residues His77 and 118-120; that span reads GHS. Asp149 contacts Mg(2+). Residues 150–151, Asn178, Tyr289, and Glu372 each bind thiamine diphosphate; that span reads GA. Asn178 serves as a coordination point for Mg(2+).

The protein belongs to the transketolase family. DXPS subfamily. As to quaternary structure, homodimer. It depends on Mg(2+) as a cofactor. Thiamine diphosphate serves as cofactor.

The enzyme catalyses D-glyceraldehyde 3-phosphate + pyruvate + H(+) = 1-deoxy-D-xylulose 5-phosphate + CO2. It participates in metabolic intermediate biosynthesis; 1-deoxy-D-xylulose 5-phosphate biosynthesis; 1-deoxy-D-xylulose 5-phosphate from D-glyceraldehyde 3-phosphate and pyruvate: step 1/1. Its function is as follows. Catalyzes the acyloin condensation reaction between C atoms 2 and 3 of pyruvate and glyceraldehyde 3-phosphate to yield 1-deoxy-D-xylulose-5-phosphate (DXP). The polypeptide is 1-deoxy-D-xylulose-5-phosphate synthase (Listeria innocua serovar 6a (strain ATCC BAA-680 / CLIP 11262)).